The chain runs to 449 residues: tRNA-2-methylthio-N(6)-dimethylallyladenosine synthase (449 aa).

Residues 2-119 (KGLFIRTYGC…LPEMIARASR (118 aa)) form the MTTase N-terminal domain. Residues Cys-11, Cys-47, Cys-82, Cys-157, Cys-161, and Cys-164 each contribute to the [4Fe-4S] cluster site. One can recognise a Radical SAM core domain in the interval 143–378 (EADGPAAFVS…QALLREQQTE (236 aa)). The TRAM domain occupies 381-443 (ASQIGKTLPV…LNSLTGELVR (63 aa)).

This sequence belongs to the methylthiotransferase family. MiaB subfamily. As to quaternary structure, monomer. It depends on [4Fe-4S] cluster as a cofactor.

Its subcellular location is the cytoplasm. The catalysed reaction is N(6)-dimethylallyladenosine(37) in tRNA + (sulfur carrier)-SH + AH2 + 2 S-adenosyl-L-methionine = 2-methylsulfanyl-N(6)-dimethylallyladenosine(37) in tRNA + (sulfur carrier)-H + 5'-deoxyadenosine + L-methionine + A + S-adenosyl-L-homocysteine + 2 H(+). Catalyzes the methylthiolation of N6-(dimethylallyl)adenosine (i(6)A), leading to the formation of 2-methylthio-N6-(dimethylallyl)adenosine (ms(2)i(6)A) at position 37 in tRNAs that read codons beginning with uridine. The chain is tRNA-2-methylthio-N(6)-dimethylallyladenosine synthase from Hyphomonas neptunium (strain ATCC 15444).